The primary structure comprises 413 residues: Monacolin J acid methylbutanoyltransferase (413 aa).

Arginine 73 contributes to the monacolin J binding site. Serine 76 (acyl-ester intermediate) is an active-site residue. Monacolin J-binding residues include arginine 173, tyrosine 188, and tyrosine 258. Glycine 366 is a 2-methylbutanoate binding site. Monacolin J contacts are provided by glutamate 388 and tryptophan 390.

Belongs to the class-A beta-lactamase family. In terms of assembly, interacts with LovF.

It carries out the reaction monacolin J carboxylate + (S)-2-methylbutanoyl-[2-methylbutanoate polyketide synthase] = lovastatin carboxylate + holo-[2-methylbutanoate polyketide synthase]. The protein operates within polyketide biosynthesis; lovastatin biosynthesis. Functionally, monacolin J acid methylbutanoyltransferase; part of the gene cluster that mediates the biosynthesis of lovastatin (also known as mevinolin, mevacor or monacolin K), a hypolipidemic inhibitor of (3S)-hydroxymethylglutaryl-coenzyme A (HMG-CoA) reductase (HMGR). The first step in the biosynthesis of lovastatin is the production of dihydromonacolin L acid by the lovastatin nonaketide synthase lovB and the trans-acting enoyl reductase lovC via condensation of one acetyl-CoA unit and 8 malonyl-CoA units. Dihydromonacolin L acid is released from lovB by the thioesterase lovG. Next, dihydromonacolin L acid is oxidized by the dihydromonacolin L monooxygenase lovA twice to form monacolin J acid. The 2-methylbutyrate moiety of lovastatin is synthesized by the lovastatin diketide synthase lovF via condensation of one acetyl-CoA unit and one malonyl-CoA unit. Finally, the covalent attachment of this moiety to monacolin J acid is catalyzed by the transesterase lovD to yield lovastatin. LovD has broad substrate specificity and can also convert monacolin J to simvastatin using alpha-dimethylbutanoyl-S-methyl-3-mercaptopropionate (DMB-S-MMP) as the thioester acyl donor, and can also catalyze the reverse reaction and function as hydrolase in vitro. LovD has much higher activity with LovF-bound 2-methylbutanoate than with free diketide substrates. The protein is Monacolin J acid methylbutanoyltransferase of Aspergillus terreus.